Here is a 438-residue protein sequence, read N- to C-terminus: High-affinity gluconate transporter (438 aa).

A run of 13 helical transmembrane segments spans residues 2–22, 23–43, 52–72, 108–128, 134–154, 174–194, 222–242, 258–278, 292–312, 327–347, 349–369, 370–390, and 418–438; these read PLVI…RFKM, NGFI…GMPL, AGVG…AMLG, VGFA…VFTI, IPLL…HGFL, TLLY…PVYA, FGVS…RAIA, FLGD…FTFG, LVSS…GGAF, SMMH…AAVL, IALG…APLI, ATTG…SVIF, and MLET…NMVI.

This sequence belongs to the GntP permease family.

Its subcellular location is the cell inner membrane. Its pathway is carbohydrate acid metabolism; D-gluconate degradation. Its function is as follows. Part of the gluconate utilization system Gnt-I; high-affinity intake of gluconate. This chain is High-affinity gluconate transporter (gntT), found in Escherichia coli (strain K12).